A 209-amino-acid chain; its full sequence is Peptide methionine sulfoxide reductase MsrA (209 aa).

Cys14 is an active-site residue. The interval 183–209 is disordered; the sequence is FSALTTGGNQPGARGGLTNNTCQHPRH. Over residues 199 to 209 the composition is skewed to polar residues; that stretch reads LTNNTCQHPRH.

It belongs to the MsrA Met sulfoxide reductase family.

The enzyme catalyses L-methionyl-[protein] + [thioredoxin]-disulfide + H2O = L-methionyl-(S)-S-oxide-[protein] + [thioredoxin]-dithiol. It carries out the reaction [thioredoxin]-disulfide + L-methionine + H2O = L-methionine (S)-S-oxide + [thioredoxin]-dithiol. In terms of biological role, has an important function as a repair enzyme for proteins that have been inactivated by oxidation. Catalyzes the reversible oxidation-reduction of methionine sulfoxide in proteins to methionine. This chain is Peptide methionine sulfoxide reductase MsrA, found in Pseudomonas fluorescens.